The chain runs to 275 residues: Large ribosomal subunit protein uL2 (275 aa).

A compositionally biased stretch (polar residues) spans 36 to 49 (TQSSTAGRNNNGRI). 2 disordered regions span residues 36–59 (TQSS…GGHK) and 224–275 (AMNP…RHKR). Over residues 50–59 (TTRHKGGGHK) the composition is skewed to basic residues.

Belongs to the universal ribosomal protein uL2 family. As to quaternary structure, part of the 50S ribosomal subunit. Forms a bridge to the 30S subunit in the 70S ribosome.

Its function is as follows. One of the primary rRNA binding proteins. Required for association of the 30S and 50S subunits to form the 70S ribosome, for tRNA binding and peptide bond formation. It has been suggested to have peptidyltransferase activity; this is somewhat controversial. Makes several contacts with the 16S rRNA in the 70S ribosome. The polypeptide is Large ribosomal subunit protein uL2 (Burkholderia vietnamiensis (strain G4 / LMG 22486) (Burkholderia cepacia (strain R1808))).